We begin with the raw amino-acid sequence, 643 residues long: Phosphomethylpyrimidine synthase (643 aa).

Residues asparagine 248, methionine 277, tyrosine 306, histidine 342, serine 362–glycine 364, aspartate 403–arginine 406, and glutamate 442 contribute to the substrate site. A Zn(2+)-binding site is contributed by histidine 446. Tyrosine 469 is a substrate binding site. Histidine 510 serves as a coordination point for Zn(2+). Residues cysteine 590, cysteine 593, and cysteine 598 each contribute to the [4Fe-4S] cluster site.

Belongs to the ThiC family. In terms of assembly, homodimer. Requires [4Fe-4S] cluster as cofactor.

It carries out the reaction 5-amino-1-(5-phospho-beta-D-ribosyl)imidazole + S-adenosyl-L-methionine = 4-amino-2-methyl-5-(phosphooxymethyl)pyrimidine + CO + 5'-deoxyadenosine + formate + L-methionine + 3 H(+). It functions in the pathway cofactor biosynthesis; thiamine diphosphate biosynthesis. Functionally, catalyzes the synthesis of the hydroxymethylpyrimidine phosphate (HMP-P) moiety of thiamine from aminoimidazole ribotide (AIR) in a radical S-adenosyl-L-methionine (SAM)-dependent reaction. The protein is Phosphomethylpyrimidine synthase of Burkholderia pseudomallei (strain 1106a).